Reading from the N-terminus, the 264-residue chain is Small ribosomal subunit protein eS1 (264 aa).

It belongs to the eukaryotic ribosomal protein eS1 family. Component of the small ribosomal subunit. Mature ribosomes consist of a small (40S) and a large (60S) subunit. The 40S subunit contains about 33 different proteins and 1 molecule of RNA (18S). The 60S subunit contains about 49 different proteins and 3 molecules of RNA (25S, 5.8S and 5S).

Its subcellular location is the cytoplasm. The polypeptide is Small ribosomal subunit protein eS1 (Babesia bovis).